A 181-amino-acid polypeptide reads, in one-letter code: Deoxyuridine 5'-triphosphate nucleotidohydrolase (181 aa).

Residues 96 to 98, Asn-109, 113 to 115, and Lys-123 each bind substrate; these read RSG and TVD.

Belongs to the dUTPase family. Mg(2+) is required as a cofactor.

It carries out the reaction dUTP + H2O = dUMP + diphosphate + H(+). Its pathway is pyrimidine metabolism; dUMP biosynthesis; dUMP from dCTP (dUTP route): step 2/2. Its function is as follows. This enzyme is involved in nucleotide metabolism: it produces dUMP, the immediate precursor of thymidine nucleotides and it decreases the intracellular concentration of dUTP so that uracil cannot be incorporated into DNA. This Corynebacterium efficiens (strain DSM 44549 / YS-314 / AJ 12310 / JCM 11189 / NBRC 100395) protein is Deoxyuridine 5'-triphosphate nucleotidohydrolase.